Here is a 240-residue protein sequence, read N- to C-terminus: PF03932 family protein CutC (240 aa).

The protein belongs to the CutC family.

The protein localises to the cytoplasm. The protein is PF03932 family protein CutC of Xanthomonas axonopodis pv. citri (strain 306).